A 167-amino-acid polypeptide reads, in one-letter code: Methyl-coenzyme M reductase II operon protein D (167 aa).

As to quaternary structure, MCR is composed of three subunits: alpha, beta, and gamma. The function of protein D is not known.

In Methanocaldococcus jannaschii (strain ATCC 43067 / DSM 2661 / JAL-1 / JCM 10045 / NBRC 100440) (Methanococcus jannaschii), this protein is Methyl-coenzyme M reductase II operon protein D (mrtD).